The following is a 334-amino-acid chain: tRNA uridine(34) hydroxylase (334 aa).

Residues 123–217 (SDPDVILVDT…YLEEVKAEES (95 aa)) form the Rhodanese domain. Catalysis depends on Cys177, which acts as the Cysteine persulfide intermediate.

It belongs to the TrhO family.

The catalysed reaction is uridine(34) in tRNA + AH2 + O2 = 5-hydroxyuridine(34) in tRNA + A + H2O. Catalyzes oxygen-dependent 5-hydroxyuridine (ho5U) modification at position 34 in tRNAs. This Shewanella baltica (strain OS185) protein is tRNA uridine(34) hydroxylase.